Consider the following 745-residue polypeptide: Elongation factor G, mitochondrial (745 aa).

The region spanning 40–317 is the tr-type G domain; sequence ERIRNIGISA…AVLDYLPNPG (278 aa). GTP is bound by residues 49–56, 116–120, and 170–173; these read AHIDSGKT, DTPGH, and NKLD.

Belongs to the TRAFAC class translation factor GTPase superfamily. Classic translation factor GTPase family. EF-G/EF-2 subfamily.

Its subcellular location is the mitochondrion. It participates in protein biosynthesis; polypeptide chain elongation. In terms of biological role, mitochondrial GTPase that catalyzes the GTP-dependent ribosomal translocation step during translation elongation. During this step, the ribosome changes from the pre-translocational (PRE) to the post-translocational (POST) state as the newly formed A-site-bound peptidyl-tRNA and P-site-bound deacylated tRNA move to the P and E sites, respectively. Catalyzes the coordinated movement of the two tRNA molecules, the mRNA and conformational changes in the ribosome. Essential during development as it acts as a retrograde signal from mitochondria to the nucleus to slow down cell proliferation if mitochondrial energy output is low. The sequence is that of Elongation factor G, mitochondrial from Drosophila sechellia (Fruit fly).